A 205-amino-acid chain; its full sequence is LexA repressor (205 aa).

The H-T-H motif DNA-binding region spans 28-48 (RAEIAASLGFRSPNAAEEHLK). Catalysis depends on for autocatalytic cleavage activity residues serine 122 and lysine 159.

Belongs to the peptidase S24 family. As to quaternary structure, homodimer.

The enzyme catalyses Hydrolysis of Ala-|-Gly bond in repressor LexA.. In terms of biological role, represses a number of genes involved in the response to DNA damage (SOS response), including recA and lexA. Binds to the 16 bp palindromic sequence 5'-CTGTATATATATACAG-3'. In the presence of single-stranded DNA, RecA interacts with LexA causing an autocatalytic cleavage which disrupts the DNA-binding part of LexA, leading to derepression of the SOS regulon and eventually DNA repair. The protein is LexA repressor of Providencia rettgeri.